We begin with the raw amino-acid sequence, 235 residues long: Large ribosomal subunit protein uL3 (235 aa).

The tract at residues 150-189 is disordered; sequence AGGPASHGSGHHRHAGSTGMRSTPGRGLPGGKKAGQMGNE.

Belongs to the universal ribosomal protein uL3 family. As to quaternary structure, part of the 50S ribosomal subunit. Forms a cluster with proteins L14 and L19.

In terms of biological role, one of the primary rRNA binding proteins, it binds directly near the 3'-end of the 23S rRNA, where it nucleates assembly of the 50S subunit. The sequence is that of Large ribosomal subunit protein uL3 from Protochlamydia amoebophila (strain UWE25).